A 393-amino-acid chain; its full sequence is Elongation factor Tu (393 aa).

Positions 10–203 (KPHVNIGTIG…AVDEFIPEPL (194 aa)) constitute a tr-type G domain. Residues 19–26 (GHVDHGKT) form a G1 region. Residue 19-26 (GHVDHGKT) participates in GTP binding. Residue Thr26 coordinates Mg(2+). The G2 stretch occupies residues 60–64 (GITIS). The G3 stretch occupies residues 81-84 (DCPG). GTP is bound by residues 81 to 85 (DCPGH) and 136 to 139 (NKVD). The segment at 136 to 139 (NKVD) is G4. Residues 173–175 (SAL) form a G5 region.

It belongs to the TRAFAC class translation factor GTPase superfamily. Classic translation factor GTPase family. EF-Tu/EF-1A subfamily. In terms of assembly, monomer.

The protein resides in the cytoplasm. The catalysed reaction is GTP + H2O = GDP + phosphate + H(+). In terms of biological role, GTP hydrolase that promotes the GTP-dependent binding of aminoacyl-tRNA to the A-site of ribosomes during protein biosynthesis. The sequence is that of Elongation factor Tu from Chlorobium phaeobacteroides (strain DSM 266 / SMG 266 / 2430).